A 141-amino-acid chain; its full sequence is Small ribosomal subunit protein uS19 (141 aa).

The protein belongs to the universal ribosomal protein uS19 family.

In terms of biological role, protein S19 forms a complex with S13 that binds strongly to the 16S ribosomal RNA. The chain is Small ribosomal subunit protein uS19 from Halorubrum lacusprofundi (strain ATCC 49239 / DSM 5036 / JCM 8891 / ACAM 34).